A 501-amino-acid polypeptide reads, in one-letter code: ATP-dependent rRNA helicase RRP3 (501 aa).

A coiled-coil region spans residues 3–44 (KIVKRKEKKANDELTSLAEKIRAKALENQKKLIEAEKEGGSE). Residues 36-79 (EAEKEGGSESDSEEDATAEKKKVLKSKSKSTVSTQNENTNEDES) are disordered. S43, S45, and S47 each carry phosphoserine. The Q motif motif lies at 81–109 (ESFSELNLVPELIQACKNLNYSKPTPIQS). Positions 112–284 (IPPALEGHDI…RASLTNPVKC (173 aa)) constitute a Helicase ATP-binding domain. Residue 125–132 (AQTGSGKT) participates in ATP binding. The DEAD box signature appears at 231-234 (DEAD). Residues 307–461 (LKNTYLIYLL…NIILTLRDSV (155 aa)) enclose the Helicase C-terminal domain. The interval 480-501 (IARGKGRRGRMMTRENMDMGER) is disordered. Residues 491 to 501 (MTRENMDMGER) are compositionally biased toward basic and acidic residues.

Belongs to the DEAD box helicase family. DDX47/RRP3 subfamily. Interacts with the SSU processome.

It is found in the nucleus. The enzyme catalyses ATP + H2O = ADP + phosphate + H(+). Its function is as follows. ATP-dependent rRNA helicase required for pre-ribosomal RNA processing. Involved in the maturation of the 35S-pre-rRNA and to its cleavage to mature 18S rRNA. The polypeptide is ATP-dependent rRNA helicase RRP3 (Saccharomyces cerevisiae (strain YJM789) (Baker's yeast)).